The sequence spans 392 residues: Formate-dependent phosphoribosylglycinamide formyltransferase (392 aa).

N(1)-(5-phospho-beta-D-ribosyl)glycinamide-binding positions include 22–23 (EL) and E82. ATP is bound by residues R114, K155, 160–165 (SSGKGQ), 195–198 (EGVV), and E203. In terms of domain architecture, ATP-grasp spans 119–308 (RLAAEELWVP…EFALHVRAFL (190 aa)). The Mg(2+) site is built by E267 and E279. N(1)-(5-phospho-beta-D-ribosyl)glycinamide contacts are provided by residues D286, K355, and 362 to 363 (RR).

Belongs to the PurK/PurT family. As to quaternary structure, homodimer.

It catalyses the reaction N(1)-(5-phospho-beta-D-ribosyl)glycinamide + formate + ATP = N(2)-formyl-N(1)-(5-phospho-beta-D-ribosyl)glycinamide + ADP + phosphate + H(+). The protein operates within purine metabolism; IMP biosynthesis via de novo pathway; N(2)-formyl-N(1)-(5-phospho-D-ribosyl)glycinamide from N(1)-(5-phospho-D-ribosyl)glycinamide (formate route): step 1/1. Involved in the de novo purine biosynthesis. Catalyzes the transfer of formate to 5-phospho-ribosyl-glycinamide (GAR), producing 5-phospho-ribosyl-N-formylglycinamide (FGAR). Formate is provided by PurU via hydrolysis of 10-formyl-tetrahydrofolate. This is Formate-dependent phosphoribosylglycinamide formyltransferase from Erwinia tasmaniensis (strain DSM 17950 / CFBP 7177 / CIP 109463 / NCPPB 4357 / Et1/99).